A 156-amino-acid chain; its full sequence is Small ribosomal subunit protein uS7 (156 aa).

It belongs to the universal ribosomal protein uS7 family. Part of the 30S ribosomal subunit. Contacts proteins S9 and S11.

In terms of biological role, one of the primary rRNA binding proteins, it binds directly to 16S rRNA where it nucleates assembly of the head domain of the 30S subunit. Is located at the subunit interface close to the decoding center, probably blocks exit of the E-site tRNA. This is Small ribosomal subunit protein uS7 from Brucella abortus (strain S19).